A 249-amino-acid polypeptide reads, in one-letter code: Triosephosphate isomerase (249 aa).

Substrate is bound at residue 9 to 11 (NWK). His95 (electrophile) is an active-site residue. Glu166 functions as the Proton acceptor in the catalytic mechanism. Substrate contacts are provided by residues Gly172, Ser211, and 232–233 (GG).

The protein belongs to the triosephosphate isomerase family. In terms of assembly, homodimer.

Its subcellular location is the cytoplasm. It catalyses the reaction D-glyceraldehyde 3-phosphate = dihydroxyacetone phosphate. The protein operates within carbohydrate biosynthesis; gluconeogenesis. Its pathway is carbohydrate degradation; glycolysis; D-glyceraldehyde 3-phosphate from glycerone phosphate: step 1/1. Involved in the gluconeogenesis. Catalyzes stereospecifically the conversion of dihydroxyacetone phosphate (DHAP) to D-glyceraldehyde-3-phosphate (G3P). The sequence is that of Triosephosphate isomerase from Legionella pneumophila (strain Paris).